A 141-amino-acid chain; its full sequence is Phage-like element PBSX protein XkdS (141 aa).

The protein to B.subtilis YqbS.

This is Phage-like element PBSX protein XkdS (xkdS) from Bacillus subtilis (strain 168).